The sequence spans 388 residues: GTPase Obg (388 aa).

The 159-residue stretch at 4–162 (SNFVDYVKIY…MTVILELKLL (159 aa)) folds into the Obg domain. The interval 18–45 (KGGRGSTHMRREKYTPNGGPDGGDGGRG) is disordered. A compositionally biased stretch (gly residues) spans 36-45 (GPDGGDGGRG). One can recognise an OBG-type G domain in the interval 163 to 329 (ADVGLVGFPN…LKDILWTELN (167 aa)). Residues 169–176 (GFPNAGKS), 194–198 (FTTLE), 216–219 (DIPG), 283–286 (TKSD), and 310–312 (SSV) contribute to the GTP site. Mg(2+) is bound by residues S176 and T196. A disordered region spans residues 352–388 (LKDMGEDEELDYEYEDDGDGDEDDLDYEYEEEDWEDK). Positions 356 to 388 (GEDEELDYEYEDDGDGDEDDLDYEYEEEDWEDK) are enriched in acidic residues.

It belongs to the TRAFAC class OBG-HflX-like GTPase superfamily. OBG GTPase family. Monomer. Requires Mg(2+) as cofactor.

It is found in the cytoplasm. Functionally, an essential GTPase which binds GTP, GDP and possibly (p)ppGpp with moderate affinity, with high nucleotide exchange rates and a fairly low GTP hydrolysis rate. Plays a role in control of the cell cycle, stress response, ribosome biogenesis and in those bacteria that undergo differentiation, in morphogenesis control. This Bacteroides fragilis (strain ATCC 25285 / DSM 2151 / CCUG 4856 / JCM 11019 / LMG 10263 / NCTC 9343 / Onslow / VPI 2553 / EN-2) protein is GTPase Obg.